A 485-amino-acid polypeptide reads, in one-letter code: Calcium-dependent protein kinase 27 (485 aa).

A lipid anchor (N-myristoyl glycine) is attached at glycine 2. The region spanning tyrosine 28–methionine 290 is the Protein kinase domain. ATP-binding positions include leucine 34–threonine 42 and lysine 57. The active-site Proton acceptor is the aspartate 156. Serine 196 carries the phosphoserine modification. The interval alanine 295–isoleucine 325 is autoinhibitory domain. EF-hand domains are found at residues glutamate 332–asparagine 367, leucine 368–leucine 403, aspartate 404–glycine 439, and isoleucine 444–leucine 474. The Ca(2+) site is built by aspartate 345, aspartate 347, serine 349, asparagine 351, glutamate 356, aspartate 381, aspartate 383, asparagine 385, threonine 387, glutamate 392, aspartate 417, aspartate 419, aspartate 421, histidine 423, glutamate 428, aspartate 452, aspartate 454, aspartate 456, lysine 458, and glutamate 463.

The protein belongs to the protein kinase superfamily. Ser/Thr protein kinase family. CDPK subfamily.

The protein resides in the membrane. The catalysed reaction is L-seryl-[protein] + ATP = O-phospho-L-seryl-[protein] + ADP + H(+). The enzyme catalyses L-threonyl-[protein] + ATP = O-phospho-L-threonyl-[protein] + ADP + H(+). Activated by calcium. Autophosphorylation may play an important role in the regulation of the kinase activity. Its function is as follows. May play a role in signal transduction pathways that involve calcium as a second messenger. The chain is Calcium-dependent protein kinase 27 (CPK27) from Arabidopsis thaliana (Mouse-ear cress).